We begin with the raw amino-acid sequence, 283 residues long: Quinate/shikimate dehydrogenase (NAD(+)) (283 aa).

S17, T69, K73, N94, and D110 together coordinate shikimate. L-quinate contacts are provided by residues 17–19 (SRT), T69, K73, N94, and D110. The Proton acceptor role is filled by K73. NAD(+) contacts are provided by residues 137 to 138 (GV), D158, R163, 203 to 206 (PMGM), A213, V228, and G251. Shikimate is bound at residue Q258. Position 258 (Q258) interacts with L-quinate.

Belongs to the shikimate dehydrogenase family. In terms of assembly, homodimer.

The catalysed reaction is L-quinate + NAD(+) = 3-dehydroquinate + NADH + H(+). It catalyses the reaction shikimate + NAD(+) = 3-dehydroshikimate + NADH + H(+). Its pathway is metabolic intermediate biosynthesis; chorismate biosynthesis; chorismate from D-erythrose 4-phosphate and phosphoenolpyruvate: step 4/7. It participates in aromatic compound metabolism; 3,4-dihydroxybenzoate biosynthesis; 3-dehydroquinate from D-quinate (NAD(+) route). Functionally, involved in the biosynthesis of the chorismate, which leads to the biosynthesis of aromatic amino acids, and plays a key role in the quinate degradation pathway. Catalyzes the NAD(+)-dependent oxidation of both quinate and shikimate to 3-dehydroquinate and 3-dehydroshikimate, respectively. It can only use NAD. The polypeptide is Quinate/shikimate dehydrogenase (NAD(+)) (Corynebacterium glutamicum (strain ATCC 13032 / DSM 20300 / JCM 1318 / BCRC 11384 / CCUG 27702 / LMG 3730 / NBRC 12168 / NCIMB 10025 / NRRL B-2784 / 534)).